A 149-amino-acid chain; its full sequence is Large ribosomal subunit protein bL9 (149 aa).

The protein belongs to the bacterial ribosomal protein bL9 family.

Binds to the 23S rRNA. This Laribacter hongkongensis (strain HLHK9) protein is Large ribosomal subunit protein bL9.